Reading from the N-terminus, the 389-residue chain is Capreomycidine synthase (389 aa).

Lys-230 is subject to N6-(pyridoxal phosphate)lysine.

The protein belongs to the class-II pyridoxal-phosphate-dependent aminotransferase family. Pyridoxal 5'-phosphate is required as a cofactor.

The catalysed reaction is (2S,3S)-hydroxyarginine = (2S,3R)-capreomycidine + H2O. Its pathway is antibiotic biosynthesis. Functionally, involved in the biosynthesis of capreomycidine, an unusual amino acid used by non-ribosomal peptide synthases (NRPS) to make the tuberactinomycin class of peptide antibiotic such as viomycin and capreomycin. Catalyzes the dehydration of the C3 hydroxyl of (3S)-hydroxy-(2S)-arginine and the intramolecular cyclization to yield (2S,3R)-capreomycidine. This chain is Capreomycidine synthase, found in Streptomyces vinaceus.